The sequence spans 246 residues: MKKTKRIFTALSHLFSPKWWKKNWQRVVFCFFFAVFALLLIFRFVPIPFSAYMVQQKIANLLQGDFRYQIQYNWVSLENISPNIQLAVISSEDQRFLEHLGFDFEAIQRAIRYNEKSNKGIRGASTISQQTAKNLMLWHGQNWLRKGLEVPATMLLELTWSKKRILEVYLNIAEFGNGIFGVEAASRYYFKKSAKNLSQNEAALLAAVLPNPIIYKVNKPSLLVRKKQTWILRQMGNLGTEYLSHL.

Residues 27 to 47 (VVFCFFFAVFALLLIFRFVPI) form a helical membrane-spanning segment.

Belongs to the glycosyltransferase 51 family.

It localises to the cell inner membrane. The catalysed reaction is [GlcNAc-(1-&gt;4)-Mur2Ac(oyl-L-Ala-gamma-D-Glu-L-Lys-D-Ala-D-Ala)](n)-di-trans,octa-cis-undecaprenyl diphosphate + beta-D-GlcNAc-(1-&gt;4)-Mur2Ac(oyl-L-Ala-gamma-D-Glu-L-Lys-D-Ala-D-Ala)-di-trans,octa-cis-undecaprenyl diphosphate = [GlcNAc-(1-&gt;4)-Mur2Ac(oyl-L-Ala-gamma-D-Glu-L-Lys-D-Ala-D-Ala)](n+1)-di-trans,octa-cis-undecaprenyl diphosphate + di-trans,octa-cis-undecaprenyl diphosphate + H(+). Its pathway is cell wall biogenesis; peptidoglycan biosynthesis. Functionally, peptidoglycan polymerase that catalyzes glycan chain elongation from lipid-linked precursors. The protein is Biosynthetic peptidoglycan transglycosylase of Haemophilus influenzae (strain ATCC 51907 / DSM 11121 / KW20 / Rd).